The following is a 297-amino-acid chain: Large ribosomal subunit protein uL18 (297 aa).

N-acetylglycine is present on G2. N6-acetyllysine is present on residues K5 and K48. S185 bears the Phosphoserine mark. An N6-acetyllysine; alternate modification is found at K220. K220 participates in a covalent cross-link: Glycyl lysine isopeptide (Lys-Gly) (interchain with G-Cter in SUMO1); alternate. Residue K220 forms a Glycyl lysine isopeptide (Lys-Gly) (interchain with G-Cter in SUMO2); alternate linkage. Residue T232 is modified to Phosphothreonine. A disordered region spans residues 253-297 (YEKKPKREVKKKRWNRPKMSLAQKKDRVAQKKASFLRAQERAAES). A compositionally biased stretch (basic residues) spans 258–268 (KREVKKKRWNR). Position 272 is a phosphoserine (S272).

It belongs to the universal ribosomal protein uL18 family. In terms of assembly, component of the large ribosomal subunit (LSU). Part of the 5S RNP complex, which is a LSU subcomplex composed of the 5S RNA, RPL5 and RPL11. Component of a hexameric 5S RNP precursor complex, composed of 5S RNA, RRS1, RPF2/BXDC1, RPL5, RPL11 and HEATR3; this complex acts as a precursor for ribosome assembly. Interacts with isoform 1 of NVL in an ATP-dependent manner. Interacts with RRP1B. Interacts with IPO5, IPO7 and KPNB1; these interactions may be involved in RPL5 nuclear import for the assembly of ribosomal subunits.

It is found in the cytoplasm. The protein localises to the nucleus. The protein resides in the nucleolus. Component of the ribosome, a large ribonucleoprotein complex responsible for the synthesis of proteins in the cell. The small ribosomal subunit (SSU) binds messenger RNAs (mRNAs) and translates the encoded message by selecting cognate aminoacyl-transfer RNA (tRNA) molecules. The large subunit (LSU) contains the ribosomal catalytic site termed the peptidyl transferase center (PTC), which catalyzes the formation of peptide bonds, thereby polymerizing the amino acids delivered by tRNAs into a polypeptide chain. The nascent polypeptides leave the ribosome through a tunnel in the LSU and interact with protein factors that function in enzymatic processing, targeting, and the membrane insertion of nascent chains at the exit of the ribosomal tunnel. As part of the 5S RNP/5S ribonucleoprotein particle it is an essential component of the LSU, required for its formation and the maturation of rRNAs. It also couples ribosome biogenesis to p53/TP53 activation. As part of the 5S RNP it accumulates in the nucleoplasm and inhibits MDM2, when ribosome biogenesis is perturbed, mediating the stabilization and the activation of TP53. The sequence is that of Large ribosomal subunit protein uL18 (RPL5) from Oryctolagus cuniculus (Rabbit).